The sequence spans 140 residues: Transcription antitermination protein NusB (140 aa).

The protein belongs to the NusB family.

Its function is as follows. Involved in transcription antitermination. Required for transcription of ribosomal RNA (rRNA) genes. Binds specifically to the boxA antiterminator sequence of the ribosomal RNA (rrn) operons. The protein is Transcription antitermination protein NusB of Elusimicrobium minutum (strain Pei191).